We begin with the raw amino-acid sequence, 171 residues long: Adenine phosphoribosyltransferase (171 aa).

It belongs to the purine/pyrimidine phosphoribosyltransferase family. In terms of assembly, homodimer.

The protein resides in the cytoplasm. The enzyme catalyses AMP + diphosphate = 5-phospho-alpha-D-ribose 1-diphosphate + adenine. It functions in the pathway purine metabolism; AMP biosynthesis via salvage pathway; AMP from adenine: step 1/1. In terms of biological role, catalyzes a salvage reaction resulting in the formation of AMP, that is energically less costly than de novo synthesis. The sequence is that of Adenine phosphoribosyltransferase from Prochlorococcus marinus (strain MIT 9515).